The following is a 119-amino-acid chain: Large ribosomal subunit protein bL20 (119 aa).

Belongs to the bacterial ribosomal protein bL20 family.

In terms of biological role, binds directly to 23S ribosomal RNA and is necessary for the in vitro assembly process of the 50S ribosomal subunit. It is not involved in the protein synthesizing functions of that subunit. The chain is Large ribosomal subunit protein bL20 from Sorangium cellulosum (strain So ce56) (Polyangium cellulosum (strain So ce56)).